Here is a 458-residue protein sequence, read N- to C-terminus: Ammonium transporter Rh type B (458 aa).

Residues 1–13 lie on the Cytoplasmic side of the membrane; that stretch reads MAGSPSRAAGRRL. A helical membrane pass occupies residues 14-34; that stretch reads QLPLLCLFLQGATAVLFAVFV. Residues 35–61 are Extracellular-facing; the sequence is RYNHKTDAALWHRGNYSNADNEFYFRY. N-linked (GlcNAc...) asparagine glycosylation is present at N49. Residues 62–82 traverse the membrane as a helical segment; that stretch reads PSFQDVHAMVFVGFGFLMVFL. Residues 83–86 lie on the Cytoplasmic side of the membrane; that stretch reads QRYG. The helical transmembrane segment at 87 to 107 threads the bilayer; it reads FSSVGFTFLLAAFALQWSTLV. The Extracellular portion of the chain corresponds to 108 to 124; that stretch reads QGFLHSFHSGHIHVGVE. Residues 125–145 form a helical membrane-spanning segment; it reads SMINADFCAGAVLISFGAVLG. Residues 146 to 149 lie on the Cytoplasmic side of the membrane; that stretch reads KTGP. A helical transmembrane segment spans residues 150–170; that stretch reads AQLLLMALLEVVLFGINEFVL. Over 171–178 the chain is Extracellular; the sequence is LHLLGVRD. Residues 179–201 form a helical membrane-spanning segment; the sequence is AGGSMTIHTFGAYFGLVLSRVLY. The Cytoplasmic portion of the chain corresponds to 202-219; sequence RPQLEKSKHRQGSVYHSD. The chain crosses the membrane as a helical span at residues 220-240; that stretch reads LFAMIGTIFLWIFWPSFNSAL. Topologically, residues 241 to 251 are extracellular; it reads TALGAGQHRTA. A helical membrane pass occupies residues 252-272; sequence LNTYYSLAASTLGTFALSALV. Residues 273 to 282 lie on the Cytoplasmic side of the membrane; the sequence is GEDGRLDMVH. A helical membrane pass occupies residues 283–303; sequence IQNAALAGGVVVGTSSEMMLT. Residue P304 is a topological domain, extracellular. The chain crosses the membrane as a helical span at residues 305-325; it reads FGALAAGFLAGTVSTLGYKFF. Residues 326–346 lie on the Cytoplasmic side of the membrane; sequence TPILESKFKVQDTCGVHNLHG. The chain crosses the membrane as a helical span at residues 347 to 367; it reads MPGVLGALLGVLVAGLATHEA. At 368-393 the chain is on the extracellular side; sequence YGDGLESVFPLIAEGQRSATSQAMLQ. The helical transmembrane segment at 394 to 414 threads the bilayer; the sequence is LFGLFVTLMFASVGGGLGGLL. Topologically, residues 415-458 are cytoplasmic; that stretch reads LKLPFLDSPPDSQCYEDQVHWQVPGEHEDEAQRPLRVEEADTQA. The tract at residues 416 to 424 is interaction with ANK3; sequence KLPFLDSPP. A Basolateral sorting signal motif is present at residues 429–432; the sequence is YEDQ. The tract at residues 439-458 is disordered; it reads GEHEDEAQRPLRVEEADTQA. Basic and acidic residues predominate over residues 444-458; sequence EAQRPLRVEEADTQA.

It belongs to the ammonium transporter (TC 2.A.49) family. Rh subfamily. As to quaternary structure, interacts (via C-terminus) with ANK2 and ANK3; required for targeting to the basolateral membrane. N-glycosylated.

The protein localises to the cell membrane. Its subcellular location is the basolateral cell membrane. It catalyses the reaction NH4(+)(in) = NH4(+)(out). The enzyme catalyses methylamine(out) = methylamine(in). It carries out the reaction CO2(out) = CO2(in). Ammonium transporter involved in the maintenance of acid-base homeostasis. Transports ammonium and its related derivative methylammonium across the basolateral plasma membrane of epithelial cells likely contributing to renal transepithelial ammonia transport and ammonia metabolism. May transport either NH4(+) or NH3 ammonia species predominantly mediating an electrogenic NH4(+) transport. May act as a CO2 channel providing for renal acid secretion. The chain is Ammonium transporter Rh type B (RHBG) from Papio hamadryas (Hamadryas baboon).